The following is a 548-amino-acid chain: Probable malate:quinone oxidoreductase (548 aa).

Positions 521-548 (DKPQAADSTPKPQLKPQPVQKEVADIAL) are disordered. Residues 530–541 (PKPQLKPQPVQK) are compositionally biased toward low complexity.

The protein belongs to the MQO family. It depends on FAD as a cofactor.

It catalyses the reaction (S)-malate + a quinone = a quinol + oxaloacetate. Its pathway is carbohydrate metabolism; tricarboxylic acid cycle; oxaloacetate from (S)-malate (quinone route): step 1/1. The chain is Probable malate:quinone oxidoreductase from Shigella sonnei (strain Ss046).